We begin with the raw amino-acid sequence, 267 residues long: Protein COFACTOR ASSEMBLY OF COMPLEX C SUBUNIT B CCB1, chloroplastic (267 aa).

The transit peptide at 1–44 directs the protein to the chloroplast; sequence MATKLISPPLSCPWVTSREVIIKGLPRRRREWMVTKRNRVSAVT. The Lumenal segment spans residues 45 to 84; sequence AMIVEPLSVVSSSAIQIHQWWEQNPNSLLLMTEATGGYSL. The helical transmembrane segment at 85-105 threads the bilayer; that stretch reads ASYYTSLGLFVISVPGLWSLI. Topologically, residues 106–164 are stromal; that stretch reads KRSVKSKIVRKTFVVNDVKKEPKQVAGEILSFFTRKNFNITDRGETITFEGKMVPSRGQ. The helical transmembrane segment at 165 to 185 threads the bilayer; the sequence is AALLTFCTCISLASVGLVLTI. A topological domain (lumenal) is located at residue threonine 186. Residues 187–207 form a helical membrane-spanning segment; that stretch reads VPDFGNNWFFIILLSPLAGVY. Topologically, residues 208–267 are stromal; the sequence is YWKKASRKEEIKVKMMVGSKGRLDEIVVQGDDVQVEEMRKELQLNEKGMVYVKGLFERSS.

The protein localises to the plastid. It localises to the chloroplast thylakoid membrane. In terms of biological role, required for the biogenesis and accumulation of native cytochrome b6 in the thylakoid membrane. Controls the conversion of apocytochrome b6 to holocytochrome b6. Required for covalent binding of the c-type heme to cytochrome b6. The sequence is that of Protein COFACTOR ASSEMBLY OF COMPLEX C SUBUNIT B CCB1, chloroplastic from Arabidopsis thaliana (Mouse-ear cress).